We begin with the raw amino-acid sequence, 1249 residues long: ATP-dependent helicase/nuclease subunit A (1249 aa).

The UvrD-like helicase ATP-binding domain occupies Thr5–Val482. ATP is bound at residue Ala26–Thr33. The 291-residue stretch at Ala521 to Gly811 folds into the UvrD-like helicase C-terminal domain.

The protein belongs to the helicase family. AddA subfamily. In terms of assembly, heterodimer of AddA and AddB/RexB. The cofactor is Mg(2+).

The enzyme catalyses Couples ATP hydrolysis with the unwinding of duplex DNA by translocating in the 3'-5' direction.. It catalyses the reaction ATP + H2O = ADP + phosphate + H(+). The heterodimer acts as both an ATP-dependent DNA helicase and an ATP-dependent, dual-direction single-stranded exonuclease. Recognizes the chi site generating a DNA molecule suitable for the initiation of homologous recombination. The AddA nuclease domain is required for chi fragment generation; this subunit has the helicase and 3' -&gt; 5' nuclease activities. The chain is ATP-dependent helicase/nuclease subunit A from Lactiplantibacillus plantarum (strain ATCC BAA-793 / NCIMB 8826 / WCFS1) (Lactobacillus plantarum).